The primary structure comprises 535 residues: Light-independent protochlorophyllide reductase subunit B (535 aa).

Residue D36 participates in [4Fe-4S] cluster binding. D292 (proton donor) is an active-site residue. 428–429 (GL) contacts substrate.

It belongs to the ChlB/BchB/BchZ family. In terms of assembly, protochlorophyllide reductase is composed of three subunits; BchL, BchN and BchB. Forms a heterotetramer of two BchB and two BchN subunits. The cofactor is [4Fe-4S] cluster.

The enzyme catalyses chlorophyllide a + oxidized 2[4Fe-4S]-[ferredoxin] + 2 ADP + 2 phosphate = protochlorophyllide a + reduced 2[4Fe-4S]-[ferredoxin] + 2 ATP + 2 H2O. Its pathway is porphyrin-containing compound metabolism; bacteriochlorophyll biosynthesis (light-independent). In terms of biological role, component of the dark-operative protochlorophyllide reductase (DPOR) that uses Mg-ATP and reduced ferredoxin to reduce ring D of protochlorophyllide (Pchlide) to form chlorophyllide a (Chlide). This reaction is light-independent. The NB-protein (BchN-BchB) is the catalytic component of the complex. This Pelodictyon phaeoclathratiforme (strain DSM 5477 / BU-1) protein is Light-independent protochlorophyllide reductase subunit B.